We begin with the raw amino-acid sequence, 823 residues long: Ankyrin repeat domain-containing protein 20B (823 aa).

6 ANK repeats span residues 32-65 (SELQ…ARDK), 66-95 (QHRT…QIDI), 99-128 (ENRT…NPNL), 132-161 (YGNT…HIEA), 165-194 (DSNT…STHA), and 198-227 (LRRS…DVFA). 2 disordered regions span residues 302 to 343 (PEKV…GVED) and 355 to 401 (VQTL…QLSE). Basic and acidic residues predominate over residues 372–382 (QERHERSEKKQ). Coiled coils occupy residues 431 to 480 (KKLK…KQLE), 565 to 724 (EMIT…NNST), and 776 to 805 (LVLE…EKAE).

The protein is Ankyrin repeat domain-containing protein 20B (ANKRD20A8P) of Homo sapiens (Human).